The sequence spans 271 residues: Zinc-finger homeodomain protein 8 (271 aa).

Ser-16 carries the phosphoserine modification. The segment at 56-107 adopts a ZF-HD dimerization-type; degenerate zinc-finger fold; sequence YKECLKNHAAGIGGHALDGCGEFMPSPSFNSNDPASLTCAACGCHRNFHRRE. A disordered region spans residues 125–154; that stretch reads HNRHQLPPPPPPHLAGIRSPDDDDSASPPP. A DNA-binding region (homeobox) is located at residues 179-242; it reads RKRFRTKFSQ…NNKISGRSGA (64 aa).

As to quaternary structure, homo- and heterodimer with other ZFHD proteins. Interacts with MIF1, MIF2 and MIF3; these interactions prevent nuclear localization and DNA-binding to inhibit transcription regulation activity. Binds to ZHD1, ZHD2, ZHD4, ZHD10 and ZHD11. Interacts with HIPP30. In terms of tissue distribution, mostly expressed in flowers and inflorescence.

It is found in the nucleus. Functionally, putative transcription factor. In Arabidopsis thaliana (Mouse-ear cress), this protein is Zinc-finger homeodomain protein 8 (ZHD8).